We begin with the raw amino-acid sequence, 372 residues long: 3-ketodihydrosphingosine reductase TSC10 (372 aa).

Valine 64 provides a ligand contact to NADP(+). NADPH-binding residues include glycine 67, serine 69, glycine 71, arginine 92, lysine 96, aspartate 123, and leucine 124. Positions 67–71 (GGSQG) match the GXSXG motif. Aspartate 123 provides a ligand contact to NADP(+). Serine 205 (proton donor) is an active-site residue. 3 residues coordinate NADP(+): tyrosine 219, lysine 223, and serine 254. The active-site Proton acceptor is the tyrosine 219. Lysine 223 (lowers pKa of active site Tyr) is an active-site residue. Residues 321-341 (LLQIPLAIFMCIFSPVWNAFV) form a helical membrane-spanning segment.

The protein belongs to the short-chain dehydrogenases/reductases (SDR) family.

The protein localises to the endoplasmic reticulum membrane. It catalyses the reaction sphinganine + NADP(+) = 3-oxosphinganine + NADPH + H(+). It functions in the pathway lipid metabolism; sphingolipid metabolism. Its function is as follows. Catalyzes the reduction of 3'-oxosphinganine (3-ketodihydrosphingosine/KDS) to sphinganine (dihydrosphingosine/DHS), the second step of de novo sphingolipid biosynthesis. The sequence is that of 3-ketodihydrosphingosine reductase TSC10 (TSC10) from Yarrowia lipolytica (strain CLIB 122 / E 150) (Yeast).